The primary structure comprises 106 residues: uncharacterized protein (106 aa).

Residues 1–31 (MNNERLMLKGIFLGAAAGAALSLLHKPTRQA) form the signal peptide. Residues 57 to 89 (VITKVDEAKKLARTLSKEVDFVNQQVKELKKTT) adopt a coiled-coil conformation.

This is an uncharacterized protein from Bacillus subtilis (strain 168).